The primary structure comprises 233 residues: Lipoprotein-releasing system ATP-binding protein LolD (233 aa).

The region spanning 6-233 (LQCDNLCKRY…TAELSLMGAE (228 aa)) is the ABC transporter domain. 42–49 (GSSGSGKS) lines the ATP pocket.

The protein belongs to the ABC transporter superfamily. Lipoprotein translocase (TC 3.A.1.125) family. As to quaternary structure, the complex is composed of two ATP-binding proteins (LolD) and two transmembrane proteins (LolC and LolE).

The protein resides in the cell inner membrane. In terms of biological role, part of the ABC transporter complex LolCDE involved in the translocation of mature outer membrane-directed lipoproteins, from the inner membrane to the periplasmic chaperone, LolA. Responsible for the formation of the LolA-lipoprotein complex in an ATP-dependent manner. The polypeptide is Lipoprotein-releasing system ATP-binding protein LolD (Salmonella choleraesuis (strain SC-B67)).